We begin with the raw amino-acid sequence, 576 residues long: uncharacterized protein (576 aa).

Composition is skewed to polar residues over residues 1-21 and 28-40; these read MSTN…QSAS and HTTS…TYQL. The disordered stretch occupies residues 1 to 40; it reads MSTNPNAGIQPLTNSISQSASAHPELYHTTSHESVSTYQL. Helical transmembrane passes span 149–169, 173–193, 200–220, 231–251, 261–281, 291–311, 366–386, 401–421, 446–466, 472–492, 503–525, and 542–562; these read FASS…HISL, LLTM…WAPL, KLPL…VAVA, FFSG…FADM, ITIF…IGGF, WTEY…YLFC, PIVF…YLLL, MGVA…GSAI, LPPM…LSWS, VHWI…LLIF, YLFR…AAGF, and GSLL…FFFF.

This sequence belongs to the major facilitator superfamily. CAR1 family.

Its subcellular location is the endoplasmic reticulum. It localises to the golgi apparatus. It is found in the membrane. This is an uncharacterized protein from Schizosaccharomyces pombe (strain 972 / ATCC 24843) (Fission yeast).